The following is a 182-amino-acid chain: Transmembrane and coiled-coil domain-containing protein 2 (182 aa).

2 helical membrane passes run 10 to 30 (IIIDYLSLSSIWNYLQATLLG) and 50 to 70 (VQVILGISFLILLGVGMYALW). Residues 122 to 149 (GLQEKILKKLQTVENKVKDLEGMIISQK) adopt a coiled-coil conformation.

Its subcellular location is the membrane. This chain is Transmembrane and coiled-coil domain-containing protein 2 (TMCO2), found in Bos taurus (Bovine).